Reading from the N-terminus, the 383-residue chain is Probable indole-3-pyruvate monooxygenase YUCCA10 (383 aa).

9–14 provides a ligand contact to FAD; the sequence is GAGPAG. Residue 177–182 coordinates NADP(+); it reads GGGNSG.

This sequence belongs to the FMO family. FAD serves as cofactor.

The enzyme catalyses indole-3-pyruvate + NADPH + O2 + H(+) = (indol-3-yl)acetate + CO2 + NADP(+) + H2O. It participates in plant hormone metabolism; auxin biosynthesis. Its function is as follows. Involved in auxin biosynthesis. In Arabidopsis thaliana (Mouse-ear cress), this protein is Probable indole-3-pyruvate monooxygenase YUCCA10 (YUC10).